The following is a 125-amino-acid chain: Succinate dehydrogenase assembly factor 3, mitochondrial (125 aa).

Residues 1–30 (MTGRHVSRVRSLYRRILQLHRALPPDLKAL) constitute a mitochondrion transit peptide.

The protein belongs to the complex I LYR family. SDHAF3 subfamily. In terms of assembly, interacts with Sdhb within an Sdha-Sdhb subcomplex.

The protein localises to the mitochondrion matrix. Plays an essential role in the assembly of succinate dehydrogenase (SDH), an enzyme complex (also referred to as respiratory complex II) that is a component of both the tricarboxylic acid (TCA) cycle and the mitochondrial electron transport chain, and which couples the oxidation of succinate to fumarate with the reduction of ubiquinone (coenzyme Q) to ubiquinol. Promotes maturation of the iron-sulfur protein subunit Sdhb of the SDH catalytic dimer, protecting it from the deleterious effects of oxidants. May act together with SDHAF1. The sequence is that of Succinate dehydrogenase assembly factor 3, mitochondrial from Rattus norvegicus (Rat).